A 401-amino-acid chain; its full sequence is Probable tRNA sulfurtransferase (401 aa).

The THUMP domain occupies 60 to 165; that stretch reads EPIIEKLKTV…QDGTYVTCRD (106 aa). ATP-binding positions include 183–184, 208–209, R265, G287, and Q296; these read ML and HF.

This sequence belongs to the ThiI family.

The protein localises to the cytoplasm. It carries out the reaction [ThiI sulfur-carrier protein]-S-sulfanyl-L-cysteine + a uridine in tRNA + 2 reduced [2Fe-2S]-[ferredoxin] + ATP + H(+) = [ThiI sulfur-carrier protein]-L-cysteine + a 4-thiouridine in tRNA + 2 oxidized [2Fe-2S]-[ferredoxin] + AMP + diphosphate. The enzyme catalyses [ThiS sulfur-carrier protein]-C-terminal Gly-Gly-AMP + S-sulfanyl-L-cysteinyl-[cysteine desulfurase] + AH2 = [ThiS sulfur-carrier protein]-C-terminal-Gly-aminoethanethioate + L-cysteinyl-[cysteine desulfurase] + A + AMP + 2 H(+). The protein operates within cofactor biosynthesis; thiamine diphosphate biosynthesis. Its function is as follows. Catalyzes the ATP-dependent transfer of a sulfur to tRNA to produce 4-thiouridine in position 8 of tRNAs, which functions as a near-UV photosensor. Also catalyzes the transfer of sulfur to the sulfur carrier protein ThiS, forming ThiS-thiocarboxylate. This is a step in the synthesis of thiazole, in the thiamine biosynthesis pathway. The sulfur is donated as persulfide by IscS. This chain is Probable tRNA sulfurtransferase, found in Geobacillus kaustophilus (strain HTA426).